The following is a 559-amino-acid chain: Dihydroxy-acid dehydratase (559 aa).

Cysteine 49 is a [2Fe-2S] cluster binding site. Residue aspartate 81 participates in Mg(2+) binding. Position 122 (cysteine 122) interacts with [2Fe-2S] cluster. Residues aspartate 123 and lysine 124 each coordinate Mg(2+). At lysine 124 the chain carries N6-carboxylysine. Residue cysteine 194 participates in [2Fe-2S] cluster binding. Glutamate 446 lines the Mg(2+) pocket. Residue serine 472 is the Proton acceptor of the active site.

The protein belongs to the IlvD/Edd family. In terms of assembly, homodimer. [2Fe-2S] cluster serves as cofactor. It depends on Mg(2+) as a cofactor.

The catalysed reaction is (2R)-2,3-dihydroxy-3-methylbutanoate = 3-methyl-2-oxobutanoate + H2O. It catalyses the reaction (2R,3R)-2,3-dihydroxy-3-methylpentanoate = (S)-3-methyl-2-oxopentanoate + H2O. The protein operates within amino-acid biosynthesis; L-isoleucine biosynthesis; L-isoleucine from 2-oxobutanoate: step 3/4. Its pathway is amino-acid biosynthesis; L-valine biosynthesis; L-valine from pyruvate: step 3/4. Functionally, functions in the biosynthesis of branched-chain amino acids. Catalyzes the dehydration of (2R,3R)-2,3-dihydroxy-3-methylpentanoate (2,3-dihydroxy-3-methylvalerate) into 2-oxo-3-methylpentanoate (2-oxo-3-methylvalerate) and of (2R)-2,3-dihydroxy-3-methylbutanoate (2,3-dihydroxyisovalerate) into 2-oxo-3-methylbutanoate (2-oxoisovalerate), the penultimate precursor to L-isoleucine and L-valine, respectively. In Prochlorococcus marinus (strain MIT 9515), this protein is Dihydroxy-acid dehydratase.